The sequence spans 154 residues: UPF0039 protein sll0451 (154 aa).

The region spanning 8-151 (QRFNDISGEA…EHISMIFRVP (144 aa)) is the N-acetyltransferase domain.

Belongs to the UPF0039 (ElaA) family.

The polypeptide is UPF0039 protein sll0451 (Synechocystis sp. (strain ATCC 27184 / PCC 6803 / Kazusa)).